A 404-amino-acid polypeptide reads, in one-letter code: Tripartite motif-containing 13 (404 aa).

The RING-type zinc-finger motif lies at 10–56 (CPICCCLFEDPRVLPCSHSFCKKCLEGILDGNRSPTWRPPFKCPTCR). Residues 87–129 (PRMSQCRVHSGQPLNIFCATDLKLICGFCATTGDHKGHKFCAL) form a B box-type zinc finger. The Zn(2+) site is built by Cys92, His95, Cys115, and His121. A helical transmembrane segment spans residues 102-119 (IFCATDLKLICGFCATTG). Positions 186-236 (KLLRTLEHKRSEILSDLETLKLAVMQTFDPEINRLRSALEEQRRALNIAES) form a coiled coil.

It localises to the endoplasmic reticulum membrane. Its pathway is protein modification; protein ubiquitination. In terms of biological role, E3 ubiquitin ligase involved in the retrotranslocation and turnover of membrane and secretory proteins from the ER through a set of processes named ER-associated degradation (ERAD). This process acts on misfolded proteins as well as in the regulated degradation of correctly folded proteins. The sequence is that of Tripartite motif-containing 13 (trim13) from Danio rerio (Zebrafish).